A 96-amino-acid polypeptide reads, in one-letter code: Large ribosomal subunit protein uL23 (96 aa).

It belongs to the universal ribosomal protein uL23 family. Part of the 50S ribosomal subunit. Contacts protein L29, and trigger factor when it is bound to the ribosome.

In terms of biological role, one of the early assembly proteins it binds 23S rRNA. One of the proteins that surrounds the polypeptide exit tunnel on the outside of the ribosome. Forms the main docking site for trigger factor binding to the ribosome. In Maridesulfovibrio salexigens (strain ATCC 14822 / DSM 2638 / NCIMB 8403 / VKM B-1763) (Desulfovibrio salexigens), this protein is Large ribosomal subunit protein uL23.